A 158-amino-acid polypeptide reads, in one-letter code: Putative ribosomal RNA large subunit methyltransferase H (158 aa).

Residues L76, G107, and 126-131 (LSRMTF) contribute to the S-adenosyl-L-methionine site.

Belongs to the RNA methyltransferase RlmH family.

It is found in the cytoplasm. It carries out the reaction pseudouridine(1915) in 23S rRNA + S-adenosyl-L-methionine = N(3)-methylpseudouridine(1915) in 23S rRNA + S-adenosyl-L-homocysteine + H(+). Specifically methylates the pseudouridine at position 1915 (m3Psi1915) in 23S rRNA. The polypeptide is Putative ribosomal RNA large subunit methyltransferase H (Methanocorpusculum labreanum (strain ATCC 43576 / DSM 4855 / Z)).